Consider the following 342-residue polypeptide: N-acetyl-gamma-glutamyl-phosphate reductase (342 aa).

The active site involves cysteine 147.

This sequence belongs to the NAGSA dehydrogenase family. Type 1 subfamily.

It localises to the cytoplasm. The enzyme catalyses N-acetyl-L-glutamate 5-semialdehyde + phosphate + NADP(+) = N-acetyl-L-glutamyl 5-phosphate + NADPH + H(+). The protein operates within amino-acid biosynthesis; L-arginine biosynthesis; N(2)-acetyl-L-ornithine from L-glutamate: step 3/4. Its function is as follows. Catalyzes the NADPH-dependent reduction of N-acetyl-5-glutamyl phosphate to yield N-acetyl-L-glutamate 5-semialdehyde. In Campylobacter jejuni (strain RM1221), this protein is N-acetyl-gamma-glutamyl-phosphate reductase.